Consider the following 179-residue polypeptide: Cytochrome b6-f complex iron-sulfur subunit (179 aa).

Residues 21 to 43 (LLTFGSATGVALGMLYPVVRYFI) traverse the membrane as a helical segment. Residues 61-162 (GNDISVSDFL…AAVSDDKITF (102 aa)) form the Rieske domain. The [2Fe-2S] cluster site is built by cysteine 108, histidine 110, cysteine 126, and histidine 129. An intrachain disulfide couples cysteine 113 to cysteine 128.

This sequence belongs to the Rieske iron-sulfur protein family. As to quaternary structure, the 4 large subunits of the cytochrome b6-f complex are cytochrome b6, subunit IV (17 kDa polypeptide, PetD), cytochrome f and the Rieske protein, while the 4 small subunits are PetG, PetL, PetM and PetN. The complex functions as a dimer. The cofactor is [2Fe-2S] cluster.

It localises to the cellular thylakoid membrane. The enzyme catalyses 2 oxidized [plastocyanin] + a plastoquinol + 2 H(+)(in) = 2 reduced [plastocyanin] + a plastoquinone + 4 H(+)(out). Its function is as follows. Component of the cytochrome b6-f complex, which mediates electron transfer between photosystem II (PSII) and photosystem I (PSI), cyclic electron flow around PSI, and state transitions. In Cyanothece sp. (strain PCC 7425 / ATCC 29141), this protein is Cytochrome b6-f complex iron-sulfur subunit.